The chain runs to 269 residues: MPELPEVEVSRLGVSPHLIGNTITRVVVRERRMRWPIPQEVAKVEGQKVTAVKRRAKYLLIETAQGTLILHLGMSGKLRVIDASTPVIKHDHVDIVLSTGKCLRFNDPRRFGAVLYQAPDTHIPMLDNLGPEPLTDDFDDTRLFTLSRNRKGPVKNFIMDNAIVVGVGNIYANEALFLAGIDPRRAAGNISAARYKSLTATIKQVLAKAIEQGGTTLKDFAQTDGKPGYFAQHLNVYGRKGEPCEACGKAIESKVIGQRNTFFCTRCQR.

The active-site Schiff-base intermediate with DNA is the Pro-2. Glu-3 serves as the catalytic Proton donor. Lys-57 (proton donor; for beta-elimination activity) is an active-site residue. DNA-binding residues include His-90, Arg-109, and Arg-150. An FPG-type zinc finger spans residues 235–269 (NVYGRKGEPCEACGKAIESKVIGQRNTFFCTRCQR). Catalysis depends on Arg-259, which acts as the Proton donor; for delta-elimination activity.

It belongs to the FPG family. Monomer. The cofactor is Zn(2+).

It catalyses the reaction Hydrolysis of DNA containing ring-opened 7-methylguanine residues, releasing 2,6-diamino-4-hydroxy-5-(N-methyl)formamidopyrimidine.. It carries out the reaction 2'-deoxyribonucleotide-(2'-deoxyribose 5'-phosphate)-2'-deoxyribonucleotide-DNA = a 3'-end 2'-deoxyribonucleotide-(2,3-dehydro-2,3-deoxyribose 5'-phosphate)-DNA + a 5'-end 5'-phospho-2'-deoxyribonucleoside-DNA + H(+). Involved in base excision repair of DNA damaged by oxidation or by mutagenic agents. Acts as a DNA glycosylase that recognizes and removes damaged bases. Has a preference for oxidized purines, such as 7,8-dihydro-8-oxoguanine (8-oxoG). Has AP (apurinic/apyrimidinic) lyase activity and introduces nicks in the DNA strand. Cleaves the DNA backbone by beta-delta elimination to generate a single-strand break at the site of the removed base with both 3'- and 5'-phosphates. The sequence is that of Formamidopyrimidine-DNA glycosylase from Alteromonas mediterranea (strain DSM 17117 / CIP 110805 / LMG 28347 / Deep ecotype).